A 949-amino-acid chain; its full sequence is MAM domain-containing glycosylphosphatidylinositol anchor protein 1 (949 aa).

A signal peptide spans 1–18 (MEMICVLFLSLVPAYSRG). Ig-like domains are found at residues 24–125 (PAQA…IRVD) and 132–230 (PVLT…KSIT). Residues Asn-42 and Asn-90 are each glycosylated (N-linked (GlcNAc...) asparagine). 2 disulfides stabilise this stretch: Cys-60–Cys-108 and Cys-157–Cys-214. N-linked (GlcNAc...) asparagine glycans are attached at residues Asn-235, Asn-247, Asn-257, Asn-292, Asn-307, and Asn-331. The Ig-like 3 domain occupies 240-323 (PALKLSVNET…VGNPAKKTVN (84 aa)). A disulfide bridge links Cys-262 with Cys-308. 3 consecutive Ig-like domains span residues 338–432 (PDVI…VEVN), 440–531 (PTIS…ALVQ), and 537–625 (PPVV…FQVS). Cysteines 357 and 415 form a disulfide. Asn-432 is a glycosylation site (N-linked (GlcNAc...) asparagine). Cystine bridges form between Cys-463-Cys-513 and Cys-559-Cys-609. N-linked (GlcNAc...) asparagine glycans are attached at residues Asn-577, Asn-649, and Asn-820. Residues 637–737 (TPNPTLSQKQ…ARIIRYMEPI (101 aa)) enclose the Fibronectin type-III domain. In terms of domain architecture, MAM spans 745–912 (NTCRFEDEKI…VTLKKGDCPR (168 aa)). The GPI-anchor amidated serine moiety is linked to residue Ser-926. The propeptide at 927 to 949 (GVSAQHGPCLCGPLTFFLYVLLR) is removed in mature form.

In terms of assembly, interacts heterophilically through its MAM domain with proteins in axon-rich regions and through its Ig-like domains with proteins in differentiating muscle. As to expression, in the embryonic brachial spinal cord, selectively expressed by medial lateral motor column neurons, some populations of dorsal root ganglion neurons, and interneurons.

It localises to the cell membrane. Required for radial migration of cortical neurons in the superficial layer of the neocortex. The protein is MAM domain-containing glycosylphosphatidylinositol anchor protein 1 of Gallus gallus (Chicken).